Consider the following 167-residue polypeptide: NADH-ubiquinone oxidoreductase chain 6 (167 aa).

5 helical membrane passes run 1-21, 23-43, 47-67, 86-106, and 133-153; these read MVLM…VASN, SPYF…GMLM, MTFL…VVFA, VFSY…AFVG, and AGGY…LVVL.

Belongs to the complex I subunit 6 family.

It localises to the mitochondrion membrane. The catalysed reaction is a ubiquinone + NADH + 5 H(+)(in) = a ubiquinol + NAD(+) + 4 H(+)(out). Its function is as follows. Core subunit of the mitochondrial membrane respiratory chain NADH dehydrogenase (Complex I) that is believed to belong to the minimal assembly required for catalysis. Complex I functions in the transfer of electrons from NADH to the respiratory chain. The immediate electron acceptor for the enzyme is believed to be ubiquinone. This chain is NADH-ubiquinone oxidoreductase chain 6 (MT-ND6), found in Polypterus ornatipinnis (Ornate bichir).